The following is a 238-amino-acid chain: MRPNDRAADQVRPIKITRNYTAYAEGSVLVEFGNTKVLCNATVEESVPRWLKGQGKGWVTAEYGMLPRATHSRTRREAANGKQGGRTMEIQRLIARSLRAVVDLEAMGEFMITVDCDVIQADGGTRTASISGASVAMADAFQHLVDSGKLKANPMKGHVAAVSVGILGEDVLCDLEYVEDSAADTDMNVVMTEEGKMIEIQGTAEGEPFSHEQLLALLESAKKGISEIVAAQKAALAN.

Residues R86 and 124–126 (GTR) contribute to the phosphate site.

It belongs to the RNase PH family. Homohexameric ring arranged as a trimer of dimers.

It catalyses the reaction tRNA(n+1) + phosphate = tRNA(n) + a ribonucleoside 5'-diphosphate. Its function is as follows. Phosphorolytic 3'-5' exoribonuclease that plays an important role in tRNA 3'-end maturation. Removes nucleotide residues following the 3'-CCA terminus of tRNAs; can also add nucleotides to the ends of RNA molecules by using nucleoside diphosphates as substrates, but this may not be physiologically important. Probably plays a role in initiation of 16S rRNA degradation (leading to ribosome degradation) during starvation. The polypeptide is Ribonuclease PH (Vibrio vulnificus (strain CMCP6)).